Consider the following 505-residue polypeptide: Maturase K (505 aa).

The protein belongs to the intron maturase 2 family. MatK subfamily.

It is found in the plastid. It localises to the chloroplast. Its function is as follows. Usually encoded in the trnK tRNA gene intron. Probably assists in splicing its own and other chloroplast group II introns. The sequence is that of Maturase K from Morus alba (White mulberry).